Consider the following 342-residue polypeptide: MTNGYIGSYTKKNGKGIYRFELNENQSRIDLLEIGFELEASTYLVRNNEVLYGINKEGEQCGVASLKIDDNGELHLLNKCLSSKAGTGCYVSISEDKRYLFEAVYGAGIIRMYELNTHTGEIIRLIQELAHDFPTGTHERQDHPHAHYINQTPDGKYVAVTDLGADRIVTYKFDDNGFEFYKESLFKDSDGTRHIEFHDNGKFAYVVHELSNTVSVAEYNDGKFEELERHLTIPENFDGDTKLAAVRLSHDQQFLYVSNRGHDSIAIFKVLDNGQHLELVTITESGGQFPRDFNIASSDDLLVCAHEQGDSVVTVFERSKETGKITLCDNTRVASEGVCVIF.

The protein belongs to the cycloisomerase 2 family.

This is an uncharacterized protein from Staphylococcus aureus (strain N315).